We begin with the raw amino-acid sequence, 275 residues long: S-methyl-5'-thioadenosine phosphorylase (275 aa).

Residues Ser20, Arg62–His63, and Ser95–Ala96 contribute to the phosphate site. 3 disulfide bridges follow: Cys143–Cys210, Cys205–Cys266, and Cys264–Cys267. A substrate-binding site is contributed by Met195. Thr196 lines the phosphate pocket. Asp219–Asp221 contacts substrate.

Belongs to the PNP/MTAP phosphorylase family. MTAP subfamily. Homohexamer. Dimer of a homotrimer.

It carries out the reaction S-methyl-5'-thioadenosine + phosphate = 5-(methylsulfanyl)-alpha-D-ribose 1-phosphate + adenine. Its pathway is amino-acid biosynthesis; L-methionine biosynthesis via salvage pathway; S-methyl-5-thio-alpha-D-ribose 1-phosphate from S-methyl-5'-thioadenosine (phosphorylase route): step 1/1. Catalyzes the reversible phosphorylation of S-methyl-5'-thioadenosine (MTA) to adenine and 5-methylthioribose-1-phosphate. Involved in the breakdown of MTA, a major by-product of polyamine biosynthesis. Responsible for the first step in the methionine salvage pathway after MTA has been generated from S-adenosylmethionine. Has broad substrate specificity with 6-aminopurine nucleosides as preferred substrates. In Aeropyrum pernix (strain ATCC 700893 / DSM 11879 / JCM 9820 / NBRC 100138 / K1), this protein is S-methyl-5'-thioadenosine phosphorylase.